Here is a 297-residue protein sequence, read N- to C-terminus: Probable endonuclease 4 (297 aa).

Residues H69, H110, E145, D179, H182, H214, D227, H229, and E259 each contribute to the Zn(2+) site.

Belongs to the AP endonuclease 2 family. Zn(2+) serves as cofactor.

The catalysed reaction is Endonucleolytic cleavage to 5'-phosphooligonucleotide end-products.. In terms of biological role, endonuclease IV plays a role in DNA repair. It cleaves phosphodiester bonds at apurinic or apyrimidinic (AP) sites, generating a 3'-hydroxyl group and a 5'-terminal sugar phosphate. This chain is Probable endonuclease 4, found in Listeria monocytogenes serovar 1/2a (strain ATCC BAA-679 / EGD-e).